Reading from the N-terminus, the 757-residue chain is RNA-directed RNA polymerase catalytic subunit (757 aa).

The disordered stretch occupies residues 53–82; it reads GRWTKNTETGAPQLNPIDGPLPKDNEPSGY. 2 short sequence motifs (nuclear localization signal) span residues 187-195 and 203-216; these read RKRRVRDNV and RTIGKKKHRLNKRS. The tract at residues 249–256 is promoter-binding site; the sequence is RGFVYFVE. One can recognise a RdRp catalytic domain in the interval 286–483; the sequence is VRKMMTNSQD…GINMSKKKSY (198 aa).

Belongs to the influenza viruses polymerase PB1 family. Influenza RNA polymerase is composed of three subunits: PB1, PB2 and PA. Interacts (via N-terminus) with PA (via C-terminus). Interacts (via C-terminus) with PB2 (via N-terminus); this interaction is essential for transcription initiation. Interacts (via C-terminus) with human PKP2 (via N-terminus); the interaction competitively inhibits the interaction between the RNA polymerase subunits PB1 and PB2. Post-translationally, phosphorylated by host PRKCA.

It localises to the host nucleus. The protein localises to the host cytoplasm. It catalyses the reaction RNA(n) + a ribonucleoside 5'-triphosphate = RNA(n+1) + diphosphate. RNA-dependent RNA polymerase which is responsible for replication and transcription of virus RNA segments. The transcription of viral mRNAs occurs by a unique mechanism called cap-snatching. 5' methylated caps of cellular mRNAs are cleaved after 10-13 nucleotides by PA. In turn, these short capped RNAs are used as primers by PB1 for transcription of viral mRNAs. During virus replication, PB1 initiates RNA synthesis and copy vRNA into complementary RNA (cRNA) which in turn serves as a template for the production of more vRNAs. The chain is RNA-directed RNA polymerase catalytic subunit from Influenza A virus (strain A/India/6263/1980 H1N1).